The chain runs to 328 residues: L-asparaginase (328 aa).

The Asparaginase/glutaminase domain occupies 1–320; the sequence is MKLLVLGTGG…EEIRKIMERN (320 aa). Threonine 11 (nucleophile; O-isoaspartyl threonine intermediate) is an active-site residue. L-aspartate-binding residues include threonine 11, aspartate 53, serine 54, threonine 85, and aspartate 86. Residues threonine 85, aspartate 86, lysine 156, and tyrosine 274 each act as charge relay system in the active site.

The protein belongs to the asparaginase 1 family. In terms of assembly, homodimer.

It catalyses the reaction L-asparagine + H2O = L-aspartate + NH4(+). Its activity is regulated as follows. Chohan et al. found that divalent metal ions and EDTA do not have any significant effect on enzyme activity, indicating that activity is independent of metal ions. In another study, Hong et al. showed that activity is enhanced by Mg(2+), significantly inhibited by Co(2+) and Ni(2+), and moderately inhibited by Ca(2+), Cu(2+) and EDTA. Unfolding studies suggest that urea cannot induce complete unfolding and inactivation of the enzyme even at a concentration 8 M. However, in the presence of 4 M guanidine hydrochloride, the enzyme structure is unfolded with complete loss of enzyme activity. Functionally, catalyzes the hydrolysis of L-asparagine into L-aspartate and ammonia. Also displays D-asparaginase activity, which is about 50% of the L-asparaginase activity. Does not exhibit glutaminase activity. This chain is L-asparaginase, found in Thermococcus kodakarensis (strain ATCC BAA-918 / JCM 12380 / KOD1) (Pyrococcus kodakaraensis (strain KOD1)).